The sequence spans 377 residues: Probable trehalose-phosphate phosphatase G (377 aa).

Residues 1-20 (MDLNINKTTPVLSDPTTPVS) form a disordered region.

It belongs to the trehalose phosphatase family. The cofactor is a divalent metal cation.

The enzyme catalyses alpha,alpha-trehalose 6-phosphate + H2O = alpha,alpha-trehalose + phosphate. The protein operates within glycan biosynthesis; trehalose biosynthesis. Functionally, removes the phosphate from trehalose 6-phosphate to produce free trehalose. Trehalose accumulation in plant may improve abiotic stress tolerance. This chain is Probable trehalose-phosphate phosphatase G (TPPG), found in Arabidopsis thaliana (Mouse-ear cress).